We begin with the raw amino-acid sequence, 765 residues long: Periplasmic beta-glucosidase (765 aa).

An N-terminal signal peptide occupies residues 1–20 (MKWLCSVGIAVSLALQPALA). D287 is an active-site residue.

Belongs to the glycosyl hydrolase 3 family.

The protein localises to the periplasm. The enzyme catalyses Hydrolysis of terminal, non-reducing beta-D-glucosyl residues with release of beta-D-glucose.. The chain is Periplasmic beta-glucosidase (bglX) from Escherichia coli (strain K12).